Consider the following 516-residue polypeptide: MEREPGAAGVRRALGRRLEAVLASRSEANAVFDILAVLQSEDQEEIQEAVRTCSRLFGALLERGELFVGQLPSEEMVMTGSQGATRKYKVWMRHRYHSCCNRLGELLGHPSFQVKELALSALLKFVQLEGAHPLEKSKWEGNYLFPRELFKLVVGGLLSPEEDQSLLLSQFREYLDYDDTRYHTMQAAVDAVARVTGQHPEVPPAFWNNAFTLLSAVSLPRREPTVSSFYVKRAELWDTWKVAHLKEHRRVFQAMWLSFLKHKLPLSLYKKVLLIVHDAILPQLAQPTLMIDFLTRACDLGGALSLLALNGLFILIHKHNLEYPDFYRKLYGLLDPSVFHVKYRARFFHLADLFLSSSHLPAYLVAAFAKRLARLALTAPPEALLMVLPFICNLLRRHPACRVLVHRPHGPELDADPYDPGEEDPAQSRALESSLWELQALQRHYHPEVSKAASVINQALSMPEVSIAPLLELTAYEIFERDLKKKGPEPVPLEFIPAQGLLGRPGELCAQHFTLS.

3 consecutive transmembrane segments (helical) span residues 297-317 (ACDL…ILIH), 347-367 (FFHL…LVAA), and 375-395 (LALT…CNLL).

This sequence belongs to the CBF/MAK21 family.

Its subcellular location is the nucleus membrane. The protein resides in the nucleus. It localises to the nucleolus. The protein is Nucleolar complex protein 4 homolog (NOC4L) of Homo sapiens (Human).